Reading from the N-terminus, the 838-residue chain is Xyloglucanase (838 aa).

A signal peptide spans 1–19; that stretch reads MKVSRVLALVLGAVIPAHA. The active-site Nucleophile is aspartate 53. Residues asparagine 232 and asparagine 436 are each glycosylated (N-linked (GlcNAc...) asparagine). Aspartate 469 acts as the Proton donor in catalysis. Residues 750–801 form a disordered region; it reads GTGGTSSSTKQSSSSTSSASSSTTLRSSVVSTTRASTVTSSRTSSAAGPTGS. The segment covering 754–797 has biased composition (low complexity); sequence TSSSTKQSSSSTSSASSSTTLRSSVVSTTRASTVTSSRTSSAAG. A CBM1 domain is found at 802 to 838; sequence GVAGHYAQCGGIGWTGPTQCVAPYVCQKQNDYYYQCV.

This sequence belongs to the glycosyl hydrolase 74 family.

It carries out the reaction Hydrolysis of (1-&gt;4)-D-glucosidic linkages in xyloglucans so as to successively remove oligosaccharides from the newly-formed chain end after endo-initiation on a polymer molecule.. In terms of biological role, hydrolyzes the glucosidic bonds of unbranched Glc residues in tamarind seed xyloglucan, producing XXXG, XLXG, XXLG and XLLG. Has a low activity against beta-glucan and carboxymethylcellulose. Not active against Avicel, laminarin, xylan, galactomannan, linear and branched arabinans, galactan, polygalacturonic acid, starch, beta-D-Glcp, beta-D-cellobiose, beta-D-Galp, beta-D-Xylp, alpha-D-Xylp, alpha-L-Araf and alpha-L-Arap. In Hypocrea jecorina (strain QM6a) (Trichoderma reesei), this protein is Xyloglucanase.